Here is a 215-residue protein sequence, read N- to C-terminus: Pyrrolidone-carboxylate peptidase (215 aa).

Residues E80, C143, and H167 contribute to the active site.

It belongs to the peptidase C15 family. Homotetramer.

The protein localises to the cytoplasm. The enzyme catalyses Release of an N-terminal pyroglutamyl group from a polypeptide, the second amino acid generally not being Pro.. Removes 5-oxoproline from various penultimate amino acid residues except L-proline. In Bacillus thuringiensis subsp. konkukian (strain 97-27), this protein is Pyrrolidone-carboxylate peptidase.